A 130-amino-acid chain; its full sequence is Lysozyme C (130 aa).

A C-type lysozyme domain is found at 1–130 (KTYERCELAR…VSPWIRDCGL (130 aa)). 4 disulfides stabilise this stretch: C6–C128, C30–C116, C65–C81, and C77–C95. Active-site residues include E35 and D53.

This sequence belongs to the glycosyl hydrolase 22 family. Monomer.

The protein localises to the secreted. It catalyses the reaction Hydrolysis of (1-&gt;4)-beta-linkages between N-acetylmuramic acid and N-acetyl-D-glucosamine residues in a peptidoglycan and between N-acetyl-D-glucosamine residues in chitodextrins.. Its function is as follows. Lysozymes have primarily a bacteriolytic function; those in tissues and body fluids are associated with the monocyte-macrophage system and enhance the activity of immunoagents. The polypeptide is Lysozyme C (LYZ) (Chelonia mydas (Green sea-turtle)).